The following is a 349-amino-acid chain: MSQTTTAALISLSVFAAYAKYYQSFQNGFIALLSDMADTKSLSGLPGGLHCEYTGFAPLDRFLTACNIFFWPVFQGEVPNLSLYGVAFASALVPMWLVIVLETHRGRRPVAALMELAFLAGPLVQCLGPGLVIPAILSRLPMSTPGTKLPFGFDIGFYPSSMIIGYILPLILAALPTPRVTAYEAKQQLIAVWQGWPVYTSLIMLIIHYLRPMRASQDWQLKIACAFAFACSTAGHLAFLWFARAKTASYHVFLPPIPWRELQVASIEAGVLRFLQWDYTLSASAMLVWTVASYCRATGKRIGQSSSVILIFGMAGVVFLGPCSVALLLYTSVALQRKGVTNYDCCRSS.

N-linked (GlcNAc...) asparagine glycosylation occurs at Asn80. 6 consecutive transmembrane segments (helical) span residues 81–101, 116–136, 155–175, 189–209, 223–243, and 308–328; these read LSLY…VIVL, LAFL…IPAI, IGFY…LAAL, LIAV…IIHY, IACA…LWFA, and VILI…VALL.

It belongs to the membrane-bound ascI terpene cyclase family.

The protein localises to the membrane. The protein operates within secondary metabolite biosynthesis. In terms of biological role, part of the gene cluster that mediates the biosynthesis of the indole diterpenes janthitremanes such as shearinine K or shearinine A. The geranylgeranyl diphosphate (GGPP) synthase janG catalyzes the first step in janthitremane biosynthesis via conversion of farnesyl pyrophosphate and isopentyl pyrophosphate into geranylgeranyl pyrophosphate (GGPP). Condensation of indole-3-glycerol phosphate with GGPP by the prenyl transferase janC then forms 3-geranylgeranylindole (3-GGI). Epoxidation by the FAD-dependent monooxygenase janM leads to a epoxidized-GGI that is substrate of the terpene cyclase janB for cyclization to yield paspaline. Paspaline is subsequently converted to 13-desoxypaspaline by the cytochrome P450 monooxygenase janP, via beta-PC-M6 in a series of alpha-face oxidations. The cytochrome P450 monooxygenase janQ is proposed to carry out sequential beta-face oxidation steps at C-7 and C-13 of 13-desoxypaspaline to form paspalicine and paspalinine respectively. The indole diterpene prenyltransferase janD may then convert paspalinine into shearinine K which is substrate of janO and/or additional enzymes for oxidation and cyclization to generate shearinine A. This Penicillium janthinellum (Penicillium vitale) protein is Terpene cyclase janA.